We begin with the raw amino-acid sequence, 291 residues long: 2-C-methyl-D-erythritol 4-phosphate cytidylyltransferase (291 aa).

A disordered region spans residues 1-23 (MTERDFDTPVETPTVQPAPAQGA).

Belongs to the IspD/TarI cytidylyltransferase family. IspD subfamily.

The catalysed reaction is 2-C-methyl-D-erythritol 4-phosphate + CTP + H(+) = 4-CDP-2-C-methyl-D-erythritol + diphosphate. Its pathway is isoprenoid biosynthesis; isopentenyl diphosphate biosynthesis via DXP pathway; isopentenyl diphosphate from 1-deoxy-D-xylulose 5-phosphate: step 2/6. Its function is as follows. Catalyzes the formation of 4-diphosphocytidyl-2-C-methyl-D-erythritol from CTP and 2-C-methyl-D-erythritol 4-phosphate (MEP). In Bifidobacterium longum (strain DJO10A), this protein is 2-C-methyl-D-erythritol 4-phosphate cytidylyltransferase.